We begin with the raw amino-acid sequence, 349 residues long: tRNA N6-adenosine threonylcarbamoyltransferase (349 aa).

Fe cation contacts are provided by His117 and His121. Residues Leu140–Gly144, Asp173, Gly186, and Asn284 contribute to the substrate site. Asp312 lines the Fe cation pocket.

It belongs to the KAE1 / TsaD family. Fe(2+) serves as cofactor.

It localises to the cytoplasm. It carries out the reaction L-threonylcarbamoyladenylate + adenosine(37) in tRNA = N(6)-L-threonylcarbamoyladenosine(37) in tRNA + AMP + H(+). In terms of biological role, required for the formation of a threonylcarbamoyl group on adenosine at position 37 (t(6)A37) in tRNAs that read codons beginning with adenine. Is involved in the transfer of the threonylcarbamoyl moiety of threonylcarbamoyl-AMP (TC-AMP) to the N6 group of A37, together with TsaE and TsaB. TsaD likely plays a direct catalytic role in this reaction. The sequence is that of tRNA N6-adenosine threonylcarbamoyltransferase from Psychrobacter arcticus (strain DSM 17307 / VKM B-2377 / 273-4).